The primary structure comprises 352 residues: Carbohydrate sulfotransferase 11 (352 aa).

Topologically, residues 1–16 are cytoplasmic; the sequence is MKPALLEVMRMNRICR. Residues 17 to 37 form a helical; Signal-anchor for type II membrane protein membrane-spanning segment; that stretch reads MVLATCLGSFILVIFYFQSML. Over 38-352 the chain is Lumenal; it reads HPVMRRNPFG…YSVPNYLKLD (315 aa). 3'-phosphoadenylyl sulfate is bound by residues 124 to 130 and 186 to 194; these read PKVACTN and REPFERLVS. N-linked (GlcNAc...) asparagine glycans are attached at residues Asn205, Asn223, Asn321, and Asn342.

It belongs to the sulfotransferase 2 family. N-glycosylated; required for activity and stability.

Its subcellular location is the golgi apparatus membrane. It catalyses the reaction chondroitin beta-D-glucuronate + n 3'-phosphoadenylyl sulfate = chondroitin 4'-sulfate + n adenosine 3',5'-bisphosphate + n H(+). Functionally, catalyzes the transfer of sulfate to position 4 of the N-acetylgalactosamine (GalNAc) residue of chondroitin. Chondroitin sulfate constitutes the predominant proteoglycan present in cartilage and is distributed on the surfaces of many cells and extracellular matrices. Can also sulfate Gal residues in desulfated dermatan sulfate. Preferentially sulfates in GlcA-&gt;GalNAc unit than in IdoA-&gt;GalNAc unit. Does not form 4, 6-di-O-sulfated GalNAc when chondroitin sulfate C is used as an acceptor. This Rattus norvegicus (Rat) protein is Carbohydrate sulfotransferase 11 (Chst11).